A 263-amino-acid chain; its full sequence is HTH-type transcriptional repressor NanR (263 aa).

Residues M1 to L22 form a disordered region. An HTH gntR-type domain is found at K30–P98. Residues E58 to A77 constitute a DNA-binding region (H-T-H motif).

This sequence belongs to the NanR family.

Transcriptional repressor that controls expression of the genes required for the catabolism of sialic acids. In Shigella sonnei (strain Ss046), this protein is HTH-type transcriptional repressor NanR.